A 491-amino-acid polypeptide reads, in one-letter code: MSNLYATEPATNGKVIIDTTAGEIEVELWGKECPKAVRNFLALTMEGYYDGVIFHRVVPGFIIQSGDPTGTGMGGESFYGEPFEDEIHGRLKFNRRGLLGMANNGSRNSNTSQFFITLDAAPELTNKHTMFGKIVGNTIFNVLNIGNLDTDKEERPLIPPKIRRIHIIENPFDDIVPRITAEEKKAQQKAKLEAKKDMEQRERRAKAKKNTGLLSFGDSEEIPEEEVTVKKKSMTRQDLVDPSEAEHTKSKTSKMTETFVNIPPSLKDLGKSRENEASEEKKAVDLKNIRAQHEREKAGGSAARQAEIKRMEEDLRRLKKRSGSVSDSESDSSSRARRKGPSYLEQELAKYASKRGRAAMKAGNKRGRRDEEEDVLTEMRKFSKRVMQAGDEPEEEQAEEIEEGEAKEEGTGIGAAMAEEEGGIEVDDDVGWLTHKLKFQVDDKELTRRAEDEYAVIDPRAKARDLLGKPDKKKLKGNPNRRTVRNSGRNR.

A PPIase cyclophilin-type domain is found at 11–167; the sequence is TNGKVIIDTT…IPPKIRRIHI (157 aa). Basic and acidic residues-rich tracts occupy residues 186 to 202, 268 to 298, and 306 to 316; these read AQQK…EQRE, DLGK…REKA, and AEIKRMEEDLR. Disordered stretches follow at residues 186 to 427 and 464 to 491; these read AQQK…IEVD and RDLL…GRNR. Positions 277-327 form a coiled coil; that stretch reads ASEEKKAVDLKNIRAQHEREKAGGSAARQAEIKRMEEDLRRLKKRSGSVSD. Residues 323–333 show a composition bias toward low complexity; sequence GSVSDSESDSS. Basic residues predominate over residues 352–367; it reads ASKRGRAAMKAGNKRG. Composition is skewed to acidic residues over residues 391–406 and 418–427; these read DEPE…EGEA and AEEEGGIEVD. A compositionally biased stretch (basic residues) spans 482 to 491; sequence RTVRNSGRNR.

Belongs to the cyclophilin-type PPIase family. CWC27 subfamily. Associated with the spliceosome.

Its subcellular location is the cytoplasm. It is found in the nucleus. It catalyses the reaction [protein]-peptidylproline (omega=180) = [protein]-peptidylproline (omega=0). Functionally, PPIases accelerate the folding of proteins. It catalyzes the cis-trans isomerization of proline imidic peptide bonds in oligopeptides. Involved in pre-mRNA splicing. This is Peptidyl-prolyl isomerase CWC27 (CWC27) from Cryptococcus neoformans var. neoformans serotype D (strain B-3501A) (Filobasidiella neoformans).